The primary structure comprises 456 residues: Serine--tRNA ligase (456 aa).

Thr-252 to Glu-254 provides a ligand contact to L-serine. ATP contacts are provided by residues Arg-283–Glu-285 and Val-299. Residue Glu-306 coordinates L-serine. Glu-370 to Ser-373 provides a ligand contact to ATP. Thr-404 provides a ligand contact to L-serine.

This sequence belongs to the class-II aminoacyl-tRNA synthetase family. Type-1 seryl-tRNA synthetase subfamily. Homodimer. The tRNA molecule binds across the dimer.

It localises to the cytoplasm. The catalysed reaction is tRNA(Ser) + L-serine + ATP = L-seryl-tRNA(Ser) + AMP + diphosphate + H(+). It catalyses the reaction tRNA(Sec) + L-serine + ATP = L-seryl-tRNA(Sec) + AMP + diphosphate + H(+). It functions in the pathway aminoacyl-tRNA biosynthesis; selenocysteinyl-tRNA(Sec) biosynthesis; L-seryl-tRNA(Sec) from L-serine and tRNA(Sec): step 1/1. Its function is as follows. Catalyzes the attachment of serine to tRNA(Ser). Is also able to aminoacylate tRNA(Sec) with serine, to form the misacylated tRNA L-seryl-tRNA(Sec), which will be further converted into selenocysteinyl-tRNA(Sec). The protein is Serine--tRNA ligase of Korarchaeum cryptofilum (strain OPF8).